A 102-amino-acid chain; its full sequence is Biotrophy-associated secreted protein 2 (102 aa).

The N-terminal stretch at 1–19 is a signal peptide; it reads MVRVSTFAAILAMALSVTA. An N-linked (GlcNAc...) asparagine glycan is attached at N46.

Its subcellular location is the secreted. In terms of biological role, secreted effector involved in biotrophic colonization of plant cells. This Pyricularia oryzae (strain 70-15 / ATCC MYA-4617 / FGSC 8958) (Rice blast fungus) protein is Biotrophy-associated secreted protein 2.